We begin with the raw amino-acid sequence, 208 residues long: Small ribosomal subunit protein uS4 (208 aa).

The region spanning cysteine 98 to alanine 160 is the S4 RNA-binding domain.

Belongs to the universal ribosomal protein uS4 family. In terms of assembly, part of the 30S ribosomal subunit. Contacts protein S5. The interaction surface between S4 and S5 is involved in control of translational fidelity.

One of the primary rRNA binding proteins, it binds directly to 16S rRNA where it nucleates assembly of the body of the 30S subunit. Functionally, with S5 and S12 plays an important role in translational accuracy. The protein is Small ribosomal subunit protein uS4 of Ruthia magnifica subsp. Calyptogena magnifica.